The following is a 415-amino-acid chain: Carbamoyl phosphate synthase arginine-specific small chain (415 aa).

Residues 1–17 constitute a mitochondrion transit peptide; it reads MLRFLKPFPLRFGKRFY. Residues serine 88, glycine 272, and glycine 274 each contribute to the L-glutamine site. Positions 225–412 constitute a Glutamine amidotransferase type-1 domain; it reads NIAVIDCGVK…IKEAIKYQKS (188 aa). The Nucleophile role is filled by cysteine 301. Residues methionine 302, glutamine 305, asparagine 343, glycine 345, and tyrosine 346 each coordinate L-glutamine. Active-site residues include histidine 385 and glutamate 387.

Belongs to the CarA family. In terms of assembly, heterodimer composed of 2 chains; the small (or glutamine) chain promotes the hydrolysis of glutamine to ammonia, which is used by the large (or ammonia) chain to synthesize carbamoyl phosphate.

It localises to the mitochondrion. The protein localises to the cytoplasm. It carries out the reaction hydrogencarbonate + L-glutamine + 2 ATP + H2O = carbamoyl phosphate + L-glutamate + 2 ADP + phosphate + 2 H(+). The enzyme catalyses L-glutamine + H2O = L-glutamate + NH4(+). The protein operates within amino-acid biosynthesis; L-arginine biosynthesis; carbamoyl phosphate from bicarbonate: step 1/1. In terms of biological role, small subunit of the arginine-specific carbamoyl phosphate synthase (CPSase). CPSase catalyzes the formation of carbamoyl phosphate from the ammonia moiety of glutamine, carbonate, and phosphate donated by ATP, the first step of the arginine biosynthetic pathway. The small subunit (glutamine amidotransferase) binds and cleaves glutamine to supply the large subunit with the substrate ammonia. The sequence is that of Carbamoyl phosphate synthase arginine-specific small chain (arg5) from Schizosaccharomyces pombe (strain 972 / ATCC 24843) (Fission yeast).